A 495-amino-acid chain; its full sequence is Probable leucine aminopeptidase 2 (495 aa).

A signal peptide spans 1–21; that stretch reads MKSQLLSLAVAVTTISQGVVG. Residues 130 to 216 enclose the PA domain; the sequence is MAELVVAKNN…SQEDGKNLAT (87 aa). N-linked (GlcNAc...) asparagine glycans are attached at residues Asn142 and Asn235. His259 and Asp271 together coordinate Zn(2+). The N-linked (GlcNAc...) asparagine glycan is linked to Asn272. The active-site Proton acceptor is the Glu303. Positions 304 and 332 each coordinate Zn(2+). N-linked (GlcNAc...) asparagine glycosylation is present at Asn352. Position 430 (His430) interacts with Zn(2+).

It belongs to the peptidase M28 family. M28A subfamily. As to quaternary structure, monomer. Zn(2+) serves as cofactor.

The protein resides in the secreted. Extracellular aminopeptidase that releases a wide variety of amino acids from natural peptides and contributes to pathogenicity. The polypeptide is Probable leucine aminopeptidase 2 (LAP2) (Arthroderma benhamiae (strain ATCC MYA-4681 / CBS 112371) (Trichophyton mentagrophytes)).